The following is an 82-amino-acid chain: ATP synthase subunit c, chloroplastic (82 aa).

Helical transmembrane passes span 3–23 (PIIS…AAIG) and 57–77 (LAFM…LLFA).

It belongs to the ATPase C chain family. As to quaternary structure, F-type ATPases have 2 components, F(1) - the catalytic core - and F(0) - the membrane proton channel. F(1) has five subunits: alpha(3), beta(3), gamma(1), delta(1), epsilon(1). F(0) has four main subunits: a(1), b(1), b'(1) and c(10-14). The alpha and beta chains form an alternating ring which encloses part of the gamma chain. F(1) is attached to F(0) by a central stalk formed by the gamma and epsilon chains, while a peripheral stalk is formed by the delta, b and b' chains.

It localises to the plastid. It is found in the chloroplast thylakoid membrane. Its function is as follows. F(1)F(0) ATP synthase produces ATP from ADP in the presence of a proton or sodium gradient. F-type ATPases consist of two structural domains, F(1) containing the extramembraneous catalytic core and F(0) containing the membrane proton channel, linked together by a central stalk and a peripheral stalk. During catalysis, ATP synthesis in the catalytic domain of F(1) is coupled via a rotary mechanism of the central stalk subunits to proton translocation. Key component of the F(0) channel; it plays a direct role in translocation across the membrane. A homomeric c-ring of between 10-14 subunits forms the central stalk rotor element with the F(1) delta and epsilon subunits. The sequence is that of ATP synthase subunit c, chloroplastic from Phaeodactylum tricornutum (strain CCAP 1055/1).